Consider the following 394-residue polypeptide: Acetate kinase (394 aa).

Asn7 is a binding site for Mg(2+). An ATP-binding site is contributed by Lys14. Arg88 contacts substrate. The active-site Proton donor/acceptor is Asp145. ATP is bound by residues 205–209 (HLGNG), 279–281 (DFR), and 327–331 (GIGEN). Glu379 is a Mg(2+) binding site.

Belongs to the acetokinase family. Homodimer. Mg(2+) serves as cofactor. Mn(2+) is required as a cofactor.

The protein resides in the cytoplasm. The enzyme catalyses acetate + ATP = acetyl phosphate + ADP. It functions in the pathway metabolic intermediate biosynthesis; acetyl-CoA biosynthesis; acetyl-CoA from acetate: step 1/2. Functionally, catalyzes the formation of acetyl phosphate from acetate and ATP. Can also catalyze the reverse reaction. The protein is Acetate kinase of Campylobacter lari (strain RM2100 / D67 / ATCC BAA-1060).